A 130-amino-acid polypeptide reads, in one-letter code: Methylglyoxal synthase (130 aa).

An MGS-like domain is found at 1–130; sequence MSKPRIALIA…DLARNMQDVC (130 aa). Residues H11, K15, 37 to 40, and 57 to 58 contribute to the substrate site; these read TGTT and SG. D63 serves as the catalytic Proton donor/acceptor. H90 is a binding site for substrate.

Belongs to the methylglyoxal synthase family.

The catalysed reaction is dihydroxyacetone phosphate = methylglyoxal + phosphate. In terms of biological role, catalyzes the formation of methylglyoxal from dihydroxyacetone phosphate. This chain is Methylglyoxal synthase, found in Burkholderia lata (strain ATCC 17760 / DSM 23089 / LMG 22485 / NCIMB 9086 / R18194 / 383).